Reading from the N-terminus, the 531-residue chain is MGVPSEGAVGNVNGNEVGTTASFAGYMETRGVREARVLASELCRHMYTLGWFSGTGGSITIKVHDDSIPKPRQLVVISPSGVQKERMVPEDMYVLSSDGFILSTPPLKPYPHKPPKCTDCTPLFMKVYEMRDAGAVIHSHGMESCIVTMILPFSKEFRITHMEMIKGIKGHGYHDELVVPIIENTAHEAELVESLTEAITAYPKTTAVLVRNHGVYVWGDSWISAKTQAECYHYLFDAAIKLHQLGLDWSTPTHGPIRSINGIWGCNGTMSRGLKVGGLSLDDMIEPSQRCILLDIEGTTTPISFVTDVLFPYAHANVGKHLAATFDSEETQDDINLLRSQIQHDLEHGVVGAVPIPPDYVGKELVIASFVANVEAMIRADRNITALKQLQGHIWKTGFQSNELVGVVFDDVPEALERWHASGIKVYIYSSGSREAQQLIFSNSNYGDLRKYFCGFFDTTMGNKKETHSYFEILRTVGIDRPSDMLFVTDVFQEAVAARAAGLEVVISIRPGNGPLPENHGFRTIETFLEI.

The interval 1-248 (MGVPSEGAVG…AIKLHQLGLD (248 aa)) is methylthioribulose-1-phosphate dehydratase. Cys-120 contributes to the substrate binding site. Zn(2+) contacts are provided by His-138 and His-140. Glu-163 functions as the Proton donor/acceptor; for methylthioribulose-1-phosphate dehydratase activity in the catalytic mechanism. Residue His-213 participates in Zn(2+) binding. Residues 292–531 (ILLDIEGTTT…FRTIETFLEI (240 aa)) are enolase-phosphatase E1. Asp-295 and Glu-297 together coordinate Mg(2+). Substrate-binding positions include 430–431 (SS) and Lys-464. Residue Asp-490 coordinates Mg(2+).

The protein in the N-terminal section; belongs to the aldolase class II family. MtnB subfamily. This sequence in the C-terminal section; belongs to the HAD-like hydrolase superfamily. MasA/MtnC family. Requires Zn(2+) as cofactor. It depends on Mg(2+) as a cofactor.

The catalysed reaction is 5-(methylsulfanyl)-D-ribulose 1-phosphate = 5-methylsulfanyl-2,3-dioxopentyl phosphate + H2O. It catalyses the reaction 5-methylsulfanyl-2,3-dioxopentyl phosphate + H2O = 1,2-dihydroxy-5-(methylsulfanyl)pent-1-en-3-one + phosphate. It functions in the pathway amino-acid biosynthesis; L-methionine biosynthesis via salvage pathway; L-methionine from S-methyl-5-thio-alpha-D-ribose 1-phosphate: step 2/6. The protein operates within amino-acid biosynthesis; L-methionine biosynthesis via salvage pathway; L-methionine from S-methyl-5-thio-alpha-D-ribose 1-phosphate: step 3/6. Its pathway is amino-acid biosynthesis; L-methionine biosynthesis via salvage pathway; L-methionine from S-methyl-5-thio-alpha-D-ribose 1-phosphate: step 4/6. This Vitis vinifera (Grape) protein is Probable bifunctional methylthioribulose-1-phosphate dehydratase/enolase-phosphatase E1 2.